We begin with the raw amino-acid sequence, 435 residues long: uncharacterized protein (435 aa).

Gln261, Tyr294, Glu318, and Asp366 together coordinate S-adenosyl-L-methionine. Cys393 functions as the Nucleophile in the catalytic mechanism.

It belongs to the class I-like SAM-binding methyltransferase superfamily. RNA M5U methyltransferase family.

This is an uncharacterized protein from Bifidobacterium longum (strain NCC 2705).